The following is a 198-amino-acid chain: Recombination protein RecR (198 aa).

The C4-type zinc-finger motif lies at 57-72; the sequence is CSVCGHITDRDPCYIC. Positions 80 to 175 constitute a Toprim domain; sequence SVVCVVQEPK…KVTRIAHGLP (96 aa).

Belongs to the RecR family.

May play a role in DNA repair. It seems to be involved in an RecBC-independent recombinational process of DNA repair. It may act with RecF and RecO. This is Recombination protein RecR from Bacillus anthracis (strain A0248).